Reading from the N-terminus, the 317-residue chain is Melanocyte-stimulating hormone receptor (317 aa).

Topologically, residues 1–37 (MPVLGSQRRLLGSLNCTPPATFPLTLAPNRTGPQCLE) are extracellular. N-linked (GlcNAc...) asparagine glycosylation is present at Asn29. Residues 38-63 (VSIPDGLFLSLGLVSLVENVLVVAAI) traverse the membrane as a helical segment. The Cytoplasmic portion of the chain corresponds to 64–72 (AKNRNLHSP). Residues 73–93 (MYYFICCLAVSDLLVSVSNVL) form a helical membrane-spanning segment. At 94-118 (ETAVMLLLEAGALAARAAVVQQLDN) the chain is on the extracellular side. Residues 119-140 (VIDMLICGSMVSSLCFLGAIAV) traverse the membrane as a helical segment. Residues 141-163 (DRYISIFYALRYHSVVTLPRAWR) are Cytoplasmic-facing. Residues 164–183 (IIAAIWVASILTSLLFITYY) traverse the membrane as a helical segment. Over 184–191 (NHTVVLLC) the chain is Extracellular. Residues 192–211 (LVGFFIAMLALMAVLYVHML) form a helical membrane-spanning segment. At 212-240 (ARACQHARGIARLQKRQRPIHQGFGLKGA) the chain is on the cytoplasmic side. Residues 241–266 (ATLTILLGVFFLCWGPFFLHLSLIVL) form a helical membrane-spanning segment. At 267-279 (CPQHPTCGCIFKN) the chain is on the extracellular side. The chain crosses the membrane as a helical span at residues 280–300 (FNLFLALIICNAIVDPLIYAF). Residues 301–317 (RSQELRKTLQEVLQCSW) are Cytoplasmic-facing. Cys315 is lipidated: S-palmitoyl cysteine.

This sequence belongs to the G-protein coupled receptor 1 family. Interacts with MGRN1, but does not undergo MGRN1-mediated ubiquitination; this interaction competes with GNAS-binding and thus inhibits agonist-induced cAMP production. Interacts with OPN3; the interaction results in a decrease in MC1R-mediated cAMP signaling and ultimately a decrease in melanin production in melanocytes.

It is found in the cell membrane. In terms of biological role, receptor for MSH (alpha, beta and gamma) and ACTH. The activity of this receptor is mediated by G proteins which activate adenylate cyclase. Mediates melanogenesis, the production of eumelanin (black/brown) and phaeomelanin (red/yellow), via regulation of cAMP signaling in melanocytes. In Capreolus capreolus (European roe deer), this protein is Melanocyte-stimulating hormone receptor (MC1R).